A 542-amino-acid chain; its full sequence is Chaperonin GroEL 2 (542 aa).

Residues 30–33 (TLGP), lysine 51, 87–91 (DGTTT), glycine 415, and aspartate 496 contribute to the ATP site.

Belongs to the chaperonin (HSP60) family. In terms of assembly, forms a cylinder of 14 subunits composed of two heptameric rings stacked back-to-back. Interacts with the co-chaperonin GroES.

It localises to the cytoplasm. It catalyses the reaction ATP + H2O + a folded polypeptide = ADP + phosphate + an unfolded polypeptide.. Together with its co-chaperonin GroES, plays an essential role in assisting protein folding. The GroEL-GroES system forms a nano-cage that allows encapsulation of the non-native substrate proteins and provides a physical environment optimized to promote and accelerate protein folding. This chain is Chaperonin GroEL 2, found in Cereibacter sphaeroides (strain ATCC 17023 / DSM 158 / JCM 6121 / CCUG 31486 / LMG 2827 / NBRC 12203 / NCIMB 8253 / ATH 2.4.1.) (Rhodobacter sphaeroides).